The sequence spans 310 residues: Probable endonuclease 4 (310 aa).

The disordered stretch occupies residues 1–31 (MNNQQSRGALGTSGATPDLPDATPGLSRNPV). Residues His-94, His-134, Glu-173, Asp-207, His-210, His-244, Asp-257, His-259, and Glu-289 each coordinate Zn(2+).

It belongs to the AP endonuclease 2 family. Zn(2+) is required as a cofactor.

It carries out the reaction Endonucleolytic cleavage to 5'-phosphooligonucleotide end-products.. In terms of biological role, endonuclease IV plays a role in DNA repair. It cleaves phosphodiester bonds at apurinic or apyrimidinic (AP) sites, generating a 3'-hydroxyl group and a 5'-terminal sugar phosphate. This is Probable endonuclease 4 from Streptomyces avermitilis (strain ATCC 31267 / DSM 46492 / JCM 5070 / NBRC 14893 / NCIMB 12804 / NRRL 8165 / MA-4680).